We begin with the raw amino-acid sequence, 439 residues long: Xylose isomerase (439 aa).

Active-site residues include His-101 and Asp-104. Mg(2+) contacts are provided by Glu-232, Glu-268, His-271, Asp-296, Asp-307, Asp-309, and Asp-339.

It belongs to the xylose isomerase family. Homotetramer. Requires Mg(2+) as cofactor.

It is found in the cytoplasm. It carries out the reaction alpha-D-xylose = alpha-D-xylulofuranose. This Actinobacillus pleuropneumoniae serotype 5b (strain L20) protein is Xylose isomerase.